We begin with the raw amino-acid sequence, 457 residues long: Multidrug resistance protein MdtK (457 aa).

Residues 1 to 10 (MQKYISEARL) lie on the Cytoplasmic side of the membrane. A helical transmembrane segment spans residues 11 to 31 (LLALAIPVILAQIAQTAMGFV). Residues 32 to 52 (DTVMAGGYSATDMAAVAIGTS) lie on the Periplasmic side of the membrane. A helical membrane pass occupies residues 53–73 (IWLPAILFGHGLLLALTPVIA). Topologically, residues 74–92 (QLNGSGRRERIAHQVRQGF) are cytoplasmic. The chain crosses the membrane as a helical span at residues 93–113 (WLAGFVSVLIMLVLWNAGYII). Residues 114-126 (RYMENIDPALADK) are Periplasmic-facing. Residues 127-147 (AVGYLRALLWGAPGYLFFQVA) traverse the membrane as a helical segment. Residues 148–159 (RNQCEGLAKAKP) are Cytoplasmic-facing. The chain crosses the membrane as a helical span at residues 160–180 (GMVMGFIGLLVNIPVNYIFIY). Residues 181–188 (GHFGMPEL) lie on the Periplasmic side of the membrane. Residues 189 to 209 (GGVGCGVATAAVYWVMFLAMV) traverse the membrane as a helical segment. The Cytoplasmic segment spans residues 210-242 (SYIKRARSMRDIRNEKGTAKPEPAVMKRLIQLG). Residues 243 to 263 (LPIALALFLEVTLFAVVALLV) traverse the membrane as a helical segment. Over 264–275 (SPLGIVDVAGHQ) the chain is Periplasmic. A helical membrane pass occupies residues 276–296 (IALNFSSLMFVLPMSLAAAVT). At 297–313 (IRVGYRLGQGSTLDAQT) the chain is on the cytoplasmic side. A helical transmembrane segment spans residues 314–334 (AARTGLMVGVCMATLTAIFTV). The Periplasmic portion of the chain corresponds to 335–349 (SLREQIALLYNDNPE). A helical membrane pass occupies residues 350-370 (VVTLAAHLMLLAAVYQISDSI). Topologically, residues 371–386 (QVIGSGILRGYKDTRS) are cytoplasmic. The helical transmembrane segment at 387 to 407 (IFYITFTAYWVLGLPSGYILA) threads the bilayer. Residues 408 to 417 (LTDLVVEPMG) lie on the Periplasmic side of the membrane. The chain crosses the membrane as a helical span at residues 418–438 (PAGFWIGFIIGLTSAAIMMML). The Cytoplasmic portion of the chain corresponds to 439–457 (RMRFLQRMPSAIILQRASR).

The protein belongs to the multi antimicrobial extrusion (MATE) (TC 2.A.66.1) family. MdtK subfamily.

The protein localises to the cell inner membrane. Functionally, multidrug efflux pump that functions probably as a Na(+)/drug antiporter. This is Multidrug resistance protein MdtK from Shigella flexneri serotype 5b (strain 8401).